A 637-amino-acid polypeptide reads, in one-letter code: Threonine--tRNA ligase (637 aa).

In terms of domain architecture, TGS spans 1–61; that stretch reads MPNVKLPDGN…KEDCSLIIVT (61 aa). Residues 242–533 are catalytic; the sequence is DHRKLGKALD…LIEHYAGKLP (292 aa). The Zn(2+) site is built by cysteine 333, histidine 384, and histidine 510.

Belongs to the class-II aminoacyl-tRNA synthetase family. Homodimer. The cofactor is Zn(2+).

The protein resides in the cytoplasm. It catalyses the reaction tRNA(Thr) + L-threonine + ATP = L-threonyl-tRNA(Thr) + AMP + diphosphate + H(+). Its function is as follows. Catalyzes the attachment of threonine to tRNA(Thr) in a two-step reaction: L-threonine is first activated by ATP to form Thr-AMP and then transferred to the acceptor end of tRNA(Thr). Also edits incorrectly charged L-seryl-tRNA(Thr). The chain is Threonine--tRNA ligase from Legionella pneumophila (strain Corby).